Consider the following 380-residue polypeptide: Probable G-protein coupled receptor 132 (380 aa).

The Extracellular segment spans residues 1–45 (MCPMLLKNGYNGNATPVTTTAPWASLGLSAKTCNNVSFEESRIVL). Asn-35 carries an N-linked (GlcNAc...) asparagine glycan. Residues 46 to 68 (VVVYSAVCTLGVPANCLTAWLAL) traverse the membrane as a helical segment. Residues 69-79 (LQVLQGNVLAV) are Cytoplasmic-facing. Residues 80–102 (YLLCLALCELLYTGTLPLWVIYI) traverse the membrane as a helical segment. At 103–116 (RNQHRWTLGLLACK) the chain is on the extracellular side. Cys-115 and Cys-186 are disulfide-bonded. Residues 117 to 138 (VTAYIFFCNIYVSILFLCCISC) form a helical membrane-spanning segment. The Cytoplasmic segment spans residues 139 to 158 (DRFVAVVYALESRGRRRRRT). A helical transmembrane segment spans residues 159–178 (AILISACIFILVGIVHYPVF). The Extracellular segment spans residues 179–197 (QTEDKETCFDMLQMDSRIA). Residues 198 to 220 (GYYYARFTVGFAIPLSIIAFTNH) form a helical membrane-spanning segment. Residues 221–246 (RIFRSIKQSMGLSAAQKAKVKHSAIA) lie on the Cytoplasmic side of the membrane. The chain crosses the membrane as a helical span at residues 247 to 269 (VVVIFLVCFAPYHLVLLVKAAAF). At 270 to 288 (SYYRGDRNAMCGLEERLYT) the chain is on the extracellular side. Residues 289 to 311 (ASVVFLCLSTVNGVADPIIYVLA) traverse the membrane as a helical segment. Topologically, residues 312–380 (TDHSRQEVSR…PAKRLIEESC (69 aa)) are cytoplasmic.

Belongs to the G-protein coupled receptor 1 family. In terms of tissue distribution, highly expressed in macrophages and hematopoietic tissues rich in lymphocytes, like spleen and thymus. Weakly expressed in heart and lung. In atherosclerotic plaques, expression is observed around the lipid core and at the shoulder region.

It is found in the cell membrane. May be a receptor for oxidized free fatty acids derived from linoleic and arachidonic acids such as 9-hydroxyoctadecadienoic acid (9-HODE). Activates a G alpha protein, most likely G alpha(q). May be involved in apoptosis. Functions at the G2/M checkpoint to delay mitosis. May function as a sensor that monitors the oxidative states and mediates appropriate cellular responses such as secretion of paracrine signals and attenuation of proliferation. May mediate ths accumulation of intracellular inositol phosphates at acidic pH through proton-sensing activity. The protein is Probable G-protein coupled receptor 132 (GPR132) of Homo sapiens (Human).